The primary structure comprises 285 residues: Proteasome subunit beta (285 aa).

A propeptide spans 1 to 50 (MTAEHPARLPQAFMTPGSSSFVDFLAAHDPSLLPSSRALPAGSAPPAPHG) (removed in mature form; by autocatalysis). The active-site Nucleophile is Thr-51. Residues 266 to 285 (RTRQARSSRSRHGSLGGDLR) form a disordered region.

Belongs to the peptidase T1B family. As to quaternary structure, the 20S proteasome core is composed of 14 alpha and 14 beta subunits that assemble into four stacked heptameric rings, resulting in a barrel-shaped structure. The two inner rings, each composed of seven catalytic beta subunits, are sandwiched by two outer rings, each composed of seven alpha subunits. The catalytic chamber with the active sites is on the inside of the barrel. Has a gated structure, the ends of the cylinder being occluded by the N-termini of the alpha-subunits. Is capped by the proteasome-associated ATPase, ARC.

Its subcellular location is the cytoplasm. It catalyses the reaction Cleavage of peptide bonds with very broad specificity.. It functions in the pathway protein degradation; proteasomal Pup-dependent pathway. With respect to regulation, the formation of the proteasomal ATPase ARC-20S proteasome complex, likely via the docking of the C-termini of ARC into the intersubunit pockets in the alpha-rings, may trigger opening of the gate for substrate entry. Interconversion between the open-gate and close-gate conformations leads to a dynamic regulation of the 20S proteasome proteolysis activity. Component of the proteasome core, a large protease complex with broad specificity involved in protein degradation. The chain is Proteasome subunit beta from Sanguibacter keddieii (strain ATCC 51767 / DSM 10542 / NCFB 3025 / ST-74).